Here is a 902-residue protein sequence, read N- to C-terminus: Leucine-rich repeat-containing G-protein coupled receptor 5A (902 aa).

Positions methionine 1 to serine 22 are cleaved as a signal peptide. Residues alanine 23–arginine 557 are Extracellular-facing. Disulfide bonds link cysteine 32–cysteine 38 and cysteine 36–cysteine 49. The LRRNT domain maps to cysteine 32 to isoleucine 61. LRR repeat units follow at residues aspartate 41–isoleucine 61, serine 62–asparagine 85, leucine 86–glycine 109, glycine 111–asparagine 133, leucine 134–glycine 157, phenylalanine 159–serine 181, leucine 182–asparagine 205, serine 207–glycine 229, leucine 230–leucine 253, lysine 254–glycine 276, proline 278–histidine 300, leucine 301–threonine 324, threonine 325–glutamine 347, leucine 348–arginine 372, glutamine 374–glutamine 393, leucine 394–serine 417, and leucine 418–glycine 441. Residues asparagine 60 and asparagine 74 are each glycosylated (N-linked (GlcNAc...) asparagine). N-linked (GlcNAc...) asparagine glycosylation occurs at asparagine 205. Cysteine 345 and cysteine 370 form a disulfide bridge. Cysteines 476 and 537 form a disulfide. Asparagine 496 carries an N-linked (GlcNAc...) asparagine glycan. The chain crosses the membrane as a helical span at residues isoleucine 558 to valine 578. The Cytoplasmic portion of the chain corresponds to phenylalanine 579–lysine 589. A helical transmembrane segment spans residues leucine 590–alanine 610. The LRR 18 repeat unit spans residues isoleucine 598–asparagine 619. The Extracellular segment spans residues threonine 611–glutamine 634. Cysteine 633 and cysteine 708 are joined by a disulfide. The helical transmembrane segment at isoleucine 635–alanine 655 threads the bilayer. At leucine 656–lysine 678 the chain is on the cytoplasmic side. A helical transmembrane segment spans residues leucine 679–glycine 699. At serine 700 to serine 718 the chain is on the extracellular side. A helical transmembrane segment spans residues methionine 719–alanine 739. The Cytoplasmic segment spans residues tyrosine 740–histidine 763. A helical membrane pass occupies residues isoleucine 764–serine 784. Residues serine 785–lysine 798 lie on the Extracellular side of the membrane. N-linked (GlcNAc...) asparagine glycosylation is found at asparagine 788 and asparagine 797. The chain crosses the membrane as a helical span at residues serine 799 to phenylalanine 819. The Cytoplasmic segment spans residues asparagine 820 to histidine 902.

Belongs to the G-protein coupled receptor 1 family. Expressed in the developing epithelial stem cells of the intestine.

Its subcellular location is the cell membrane. It is found in the golgi apparatus. The protein resides in the trans-Golgi network membrane. Receptor for R-spondins that potentiates the canonical Wnt signaling pathway and acts as a stem cell marker of the intestinal epithelium and the hair follicle. Upon binding to R-spondins (RSPO1, RSPO2, RSPO3 or RSPO4), associates with phosphorylated LRP6 and frizzled receptors that are activated by extracellular Wnt receptors, triggering the canonical Wnt signaling pathway to increase expression of target genes. In contrast to classical G-protein coupled receptors, does not activate heterotrimeric G-proteins to transduce the signal. Involved in the development and/or maintenance of the adult intestinal stem cells during postembryonic development. This chain is Leucine-rich repeat-containing G-protein coupled receptor 5A (lgr5-a), found in Xenopus laevis (African clawed frog).